Reading from the N-terminus, the 298-residue chain is tRNA dimethylallyltransferase (298 aa).

Residue G12–T19 coordinates ATP. A substrate-binding site is contributed by T14–T19. Residues D37–Q40 form an interaction with substrate tRNA region.

Belongs to the IPP transferase family. As to quaternary structure, monomer. Requires Mg(2+) as cofactor.

It catalyses the reaction adenosine(37) in tRNA + dimethylallyl diphosphate = N(6)-dimethylallyladenosine(37) in tRNA + diphosphate. Catalyzes the transfer of a dimethylallyl group onto the adenine at position 37 in tRNAs that read codons beginning with uridine, leading to the formation of N6-(dimethylallyl)adenosine (i(6)A). The polypeptide is tRNA dimethylallyltransferase (Synechococcus sp. (strain CC9902)).